The chain runs to 501 residues: Dipeptide and tripeptide permease A (501 aa).

Residues 1–34 (MSTANNNQPESISMNAFKQPKAFYLIFSIELWER) are Cytoplasmic-facing. The helical transmembrane segment at 35-55 (FGYYGLQGIMAVYLVKMLGMS) threads the bilayer. At 56-59 (EADS) the chain is on the periplasmic side. Residues 60–80 (ITLFSSFSALVYGFVAIGGWL) traverse the membrane as a helical segment. The Cytoplasmic portion of the chain corresponds to 81-89 (GDKVLGAKR). 2 consecutive transmembrane segments (helical) span residues 90–110 (VIVL…YSGH) and 111–131 (EIFW…LFKA). Residues 132–153 (NPSSLLSTCYSKDDPRLDGAFT) are Periplasmic-facing. The chain crosses the membrane as a helical span at residues 154-174 (MYYMSINIGSFFSMLATPWLA). Residues 175-178 (AKYG) are Cytoplasmic-facing. The chain crosses the membrane as a helical span at residues 179 to 199 (WSVAFSLSVVGMLITLVNFWF). The Periplasmic portion of the chain corresponds to 200 to 220 (CRKWVKNQGSKPDFLPLQFKK). A helical transmembrane segment spans residues 221-241 (LLMVLVGIIALITLSNWLLHN). Topologically, residues 242-246 (QIIAR) are cytoplasmic. Residues 247-267 (WALALVSLGIIFIFTKETLFL) form a helical membrane-spanning segment. Topologically, residues 268–274 (QGIARRR) are periplasmic. Residues 275–295 (MIVAFLLMLEAVIFFVLYSQM) form a helical membrane-spanning segment. The Cytoplasmic segment spans residues 296 to 320 (PTSLNFFAIHNVEHSIFGIGFEPEQ). Residues 321–341 (FQALNPFWIMLASPILAAIYN) traverse the membrane as a helical segment. The Periplasmic segment spans residues 342 to 352 (KMGDRLPMPHK). A helical membrane pass occupies residues 353–373 (FAFGMMLCSAAFLVLPWGASF). Residues 374–383 (ANEHGIVSVN) are Cytoplasmic-facing. Residues 384 to 404 (WLILSYALQSIGELMISGLGL) traverse the membrane as a helical segment. The Periplasmic segment spans residues 405–414 (AMVAQLVPQR). A helical transmembrane segment spans residues 415–435 (LMGFIMGSWFLTTAAAALIAG). Topologically, residues 436-460 (KVAALTAVPSDAITDAHASLAIYSH) are cytoplasmic. The helical transmembrane segment at 461–481 (VFMQIGIVTAIIAVLMMLTAP) threads the bilayer. Residues 482 to 501 (KLYRMTLAPSDHNDVKIMTQ) are Periplasmic-facing.

The protein belongs to the major facilitator superfamily. Proton-dependent oligopeptide transporter (POT/PTR) (TC 2.A.17) family. DtpA subfamily.

The protein localises to the cell inner membrane. Proton-dependent permease that transports di- and tripeptides. The sequence is that of Dipeptide and tripeptide permease A from Yersinia pestis.